We begin with the raw amino-acid sequence, 940 residues long: Pentatricopeptide repeat-containing protein At5g14770, mitochondrial (940 aa).

The transit peptide at 1–24 (MIMIRIWNNYKGKYRFFLSNCRSF) directs the protein to the mitochondrion. PPR repeat units lie at residues 59–93 (YVSL…GVVP), 94–129 (DSRL…GVSP), 130–161 (DVFA…VISI), 162–196 (DTVT…GILP), 197–231 (DTVS…NLIT), 241–259 (NLHA…GFDP), 260–294 (DVVT…SVYP), 295–329 (NHVT…GIPV), 330–364 (DLVV…NQVP), 365–399 (NVVT…SVIP), 400–434 (NVVT…NVVP), 435–469 (NGFT…GVEE), 470–504 (NNYI…GVTL), 505–539 (DQIN…GMPW), 540–573 (DVVS…GIEP), 574–608 (DIAT…GIKP), 609–643 (SLMS…EIHP), 644–678 (NLTT…GIKL), 679–713 (SRQV…GFIP), 714–748 (DTVT…GISP), 749–783 (NVAT…GMRP), 784–818 (DDFT…GLVP), 819–853 (KTST…GVSP), and 854–891 (NTST…GLLK).

It belongs to the PPR family. P subfamily.

Its subcellular location is the mitochondrion. The sequence is that of Pentatricopeptide repeat-containing protein At5g14770, mitochondrial from Arabidopsis thaliana (Mouse-ear cress).